The sequence spans 74 residues: Translation initiation factor IF-1 (74 aa).

Positions 1 to 72 (MGKEDVIRME…TRGRIVYRKK (72 aa)) constitute an S1-like domain.

This sequence belongs to the IF-1 family. As to quaternary structure, component of the 30S ribosomal translation pre-initiation complex which assembles on the 30S ribosome in the order IF-2 and IF-3, IF-1 and N-formylmethionyl-tRNA(fMet); mRNA recruitment can occur at any time during PIC assembly.

It localises to the cytoplasm. Its function is as follows. One of the essential components for the initiation of protein synthesis. Stabilizes the binding of IF-2 and IF-3 on the 30S subunit to which N-formylmethionyl-tRNA(fMet) subsequently binds. Helps modulate mRNA selection, yielding the 30S pre-initiation complex (PIC). Upon addition of the 50S ribosomal subunit IF-1, IF-2 and IF-3 are released leaving the mature 70S translation initiation complex. This chain is Translation initiation factor IF-1, found in Thermotoga maritima (strain ATCC 43589 / DSM 3109 / JCM 10099 / NBRC 100826 / MSB8).